Here is a 637-residue protein sequence, read N- to C-terminus: Limonene synthase, chloroplastic (637 aa).

A chloroplast-targeting transit peptide spans 1–56 (MALLSIVSLQVPKSCGLKSLISSSNVQKALCISTAVPTLRMRRRQKALVINMKLTT). Mg(2+)-binding residues include Asp-388, Asp-392, and Asp-540. Residues 388 to 392 (DDIYD) carry the DDXXD motif motif.

This sequence belongs to the terpene synthase family. Tpsd subfamily. Requires Mg(2+) as cofactor. Mn(2+) is required as a cofactor. It depends on K(+) as a cofactor.

It is found in the plastid. The protein resides in the chloroplast. It catalyses the reaction (2E)-geranyl diphosphate = (4S)-limonene + diphosphate. It participates in terpene metabolism; oleoresin biosynthesis. Its function is as follows. Involved in defensive oleoresin formation in conifers in response to insect attack or other injury. Involved in monoterpene (C10) olefins biosynthesis. The chain is Limonene synthase, chloroplastic (ag10) from Abies grandis (Grand fir).